The following is a 385-amino-acid chain: Probable dual-specificity RNA methyltransferase RlmN (385 aa).

The tract at residues 1 to 35 is disordered; sequence MNVKEPAEEAAIQLRTERQRIEPEGEEQSEQPTDL. Glu121 acts as the Proton acceptor in catalysis. The Radical SAM core domain maps to 132 to 367; it reads TRDRVTVCLS…AVIREERGQD (236 aa). Residues Cys139 and Cys372 are joined by a disulfide bond. Cys146, Cys150, and Cys153 together coordinate [4Fe-4S] cluster. S-adenosyl-L-methionine contacts are provided by residues 198-199, Ser230, 253-255, and Asn329; these read GE and SLH. The active-site S-methylcysteine intermediate is Cys372.

Belongs to the radical SAM superfamily. RlmN family. It depends on [4Fe-4S] cluster as a cofactor.

It localises to the cytoplasm. The enzyme catalyses adenosine(2503) in 23S rRNA + 2 reduced [2Fe-2S]-[ferredoxin] + 2 S-adenosyl-L-methionine = 2-methyladenosine(2503) in 23S rRNA + 5'-deoxyadenosine + L-methionine + 2 oxidized [2Fe-2S]-[ferredoxin] + S-adenosyl-L-homocysteine. It carries out the reaction adenosine(37) in tRNA + 2 reduced [2Fe-2S]-[ferredoxin] + 2 S-adenosyl-L-methionine = 2-methyladenosine(37) in tRNA + 5'-deoxyadenosine + L-methionine + 2 oxidized [2Fe-2S]-[ferredoxin] + S-adenosyl-L-homocysteine. In terms of biological role, specifically methylates position 2 of adenine 2503 in 23S rRNA and position 2 of adenine 37 in tRNAs. The protein is Probable dual-specificity RNA methyltransferase RlmN of Heliobacterium modesticaldum (strain ATCC 51547 / Ice1).